The sequence spans 135 residues: ATP synthase epsilon chain (135 aa).

This sequence belongs to the ATPase epsilon chain family. F-type ATPases have 2 components, CF(1) - the catalytic core - and CF(0) - the membrane proton channel. CF(1) has five subunits: alpha(3), beta(3), gamma(1), delta(1), epsilon(1). CF(0) has three main subunits: a, b and c.

It is found in the cell inner membrane. In terms of biological role, produces ATP from ADP in the presence of a proton gradient across the membrane. The polypeptide is ATP synthase epsilon chain (Rhizobium etli (strain CIAT 652)).